The sequence spans 243 residues: Clathrin light chain A (243 aa).

Blocked amino end (Met) is present on Met1. Disordered stretches follow at residues 1 to 22 and 49 to 87; these read MAEL…GVAG and ILDG…GPTD. Positions 10-20 are enriched in gly residues; sequence PAGGPALGNGV. The segment at 95 to 157 is involved in binding clathrin heavy chain; it reads VDRLQSEPES…QLQKTKANNR (63 aa). Ser100 and Ser201 each carry phosphoserine. Position 218 is an N6-acetyllysine (Lys218). Ser231 bears the Phosphoserine mark. Lys237 is subject to N6-acetyllysine.

This sequence belongs to the clathrin light chain family. As to quaternary structure, clathrin coats are formed from molecules containing 3 heavy chains and 3 light chains. Interacts with CALY; the interaction stimulates clathrin self-assembly and clathrin-mediated endocytosis. Interacts with CKAP5 and TACC3 forming the TACC3/ch-TOG/clathrin complex located at spindle inter-microtubules bridges; the complex implicates clathrin triskelions.

It localises to the cytoplasmic vesicle membrane. It is found in the membrane. Its subcellular location is the coated pit. The protein resides in the cytoplasm. The protein localises to the cytoskeleton. It localises to the spindle. Functionally, clathrin is the major protein of the polyhedral coat of coated pits and vesicles. Acts as a component of the TACC3/ch-TOG/clathrin complex proposed to contribute to stabilization of kinetochore fibers of the mitotic spindle by acting as inter-microtubule bridge. This chain is Clathrin light chain A (CLTA), found in Bos taurus (Bovine).